The following is a 277-amino-acid chain: 2-dehydro-3-deoxyphosphooctonate aldolase (277 aa).

It belongs to the KdsA family.

It is found in the cytoplasm. The catalysed reaction is D-arabinose 5-phosphate + phosphoenolpyruvate + H2O = 3-deoxy-alpha-D-manno-2-octulosonate-8-phosphate + phosphate. It participates in carbohydrate biosynthesis; 3-deoxy-D-manno-octulosonate biosynthesis; 3-deoxy-D-manno-octulosonate from D-ribulose 5-phosphate: step 2/3. It functions in the pathway bacterial outer membrane biogenesis; lipopolysaccharide biosynthesis. This is 2-dehydro-3-deoxyphosphooctonate aldolase from Syntrophotalea carbinolica (strain DSM 2380 / NBRC 103641 / GraBd1) (Pelobacter carbinolicus).